The following is a 437-amino-acid chain: MLTAFARAFRTPDLRKKLLFTLAIIVVYRVGTHIPIPGVDYKNVQQCVREASGNQGLFGLVNMFSGGALLQITIFALGIMPYITASIILQLLTVVIPRLEALKKEGQAGTAKITQYTRYLTVALAILQGTGLVATARSAPLFGRCSVGGQIVPDQSIFTTITMVICMTAGTCVVMWLGELITDRGIGNGMSILMFISIAATFPSALWAIKKQGTLAGGWIEFGTVIAVGLIMVALVVFVEQAQRRIPVQYAKRMIGRRSYGGTSTYIPLKVNQAGVIPVIFASSLLYIPALVAQFAGGNSGWKSWVEQNLTKGDHPIYIVTYFLLIVFFAFFYVAISFNPEEVADNMKKYGGFIPGIRAGRPTAEYLSYVLNRITWPGSLYLGLIALVPTMALVGFGASQNFPFGGTSILIIVGVGLETVKQIESQLQQRNYEGFLR.

A run of 10 helical transmembrane segments spans residues 19-39 (LFTL…IPGV), 69-89 (LLQI…SIIL), 122-142 (VALA…APLF), 157-177 (IFTT…VMWL), 189-209 (GMSI…LWAI), 219-239 (WIEF…VVFV), 276-296 (VIPV…AQFA), 316-336 (PIYI…YVAI), 378-398 (GSLY…GFGA), and 400-420 (QNFP…LETV).

Belongs to the SecY/SEC61-alpha family. As to quaternary structure, component of the Sec protein translocase complex. Heterotrimer consisting of SecY, SecE and SecG subunits. The heterotrimers can form oligomers, although 1 heterotrimer is thought to be able to translocate proteins. Interacts with the ribosome. Interacts with SecDF, and other proteins may be involved. Interacts with SecA.

Its subcellular location is the cell membrane. Functionally, the central subunit of the protein translocation channel SecYEG. Consists of two halves formed by TMs 1-5 and 6-10. These two domains form a lateral gate at the front which open onto the bilayer between TMs 2 and 7, and are clamped together by SecE at the back. The channel is closed by both a pore ring composed of hydrophobic SecY resides and a short helix (helix 2A) on the extracellular side of the membrane which forms a plug. The plug probably moves laterally to allow the channel to open. The ring and the pore may move independently. The sequence is that of Protein translocase subunit SecY from Streptomyces galbus.